The following is a 246-amino-acid chain: Putative S-adenosyl-L-methionine-dependent methyltransferase Mflv_0168 (246 aa).

Residues aspartate 112 and aspartate 141–leucine 142 each bind S-adenosyl-L-methionine.

It belongs to the UPF0677 family.

Its function is as follows. Exhibits S-adenosyl-L-methionine-dependent methyltransferase activity. This Mycolicibacterium gilvum (strain PYR-GCK) (Mycobacterium gilvum (strain PYR-GCK)) protein is Putative S-adenosyl-L-methionine-dependent methyltransferase Mflv_0168.